The sequence spans 347 residues: Anthranilate phosphoribosyltransferase (347 aa).

Residues Gly-88, 91 to 92 (GD), Thr-96, 98 to 101 (NIST), 116 to 124 (KHGNRSVSS), and Ser-128 each bind 5-phospho-alpha-D-ribose 1-diphosphate. Gly-88 is an anthranilate binding site. Ser-100 is a Mg(2+) binding site. Residue Asn-119 coordinates anthranilate. Arg-174 is a binding site for anthranilate. Positions 232 and 233 each coordinate Mg(2+).

It belongs to the anthranilate phosphoribosyltransferase family. Homodimer. Requires Mg(2+) as cofactor.

The enzyme catalyses N-(5-phospho-beta-D-ribosyl)anthranilate + diphosphate = 5-phospho-alpha-D-ribose 1-diphosphate + anthranilate. It functions in the pathway amino-acid biosynthesis; L-tryptophan biosynthesis; L-tryptophan from chorismate: step 2/5. Its function is as follows. Catalyzes the transfer of the phosphoribosyl group of 5-phosphorylribose-1-pyrophosphate (PRPP) to anthranilate to yield N-(5'-phosphoribosyl)-anthranilate (PRA). The chain is Anthranilate phosphoribosyltransferase from Shewanella sp. (strain ANA-3).